Here is a 131-residue protein sequence, read N- to C-terminus: Small ribosomal subunit protein uS8 (131 aa).

The protein belongs to the universal ribosomal protein uS8 family. Part of the 30S ribosomal subunit. Contacts proteins S5 and S12.

Its function is as follows. One of the primary rRNA binding proteins, it binds directly to 16S rRNA central domain where it helps coordinate assembly of the platform of the 30S subunit. The sequence is that of Small ribosomal subunit protein uS8 from Rhizorhabdus wittichii (strain DSM 6014 / CCUG 31198 / JCM 15750 / NBRC 105917 / EY 4224 / RW1) (Sphingomonas wittichii).